We begin with the raw amino-acid sequence, 230 residues long: 2,3-bisphosphoglycerate-dependent phosphoglycerate mutase (230 aa).

Substrate is bound by residues 8–15, 21–22, Arg60, 87–90, Lys98, 114–115, and 183–184; these read RHGESEWN, TG, ERHY, RR, and GN. The active-site Tele-phosphohistidine intermediate is His9. Glu87 serves as the catalytic Proton donor/acceptor.

This sequence belongs to the phosphoglycerate mutase family. BPG-dependent PGAM subfamily.

It carries out the reaction (2R)-2-phosphoglycerate = (2R)-3-phosphoglycerate. It participates in carbohydrate degradation; glycolysis; pyruvate from D-glyceraldehyde 3-phosphate: step 3/5. Its function is as follows. Catalyzes the interconversion of 2-phosphoglycerate and 3-phosphoglycerate. The protein is 2,3-bisphosphoglycerate-dependent phosphoglycerate mutase of Streptococcus gordonii (strain Challis / ATCC 35105 / BCRC 15272 / CH1 / DL1 / V288).